A 494-amino-acid polypeptide reads, in one-letter code: Membrane-bound lytic murein transglycosylase F 1 (494 aa).

A signal peptide spans M1–A24. Residues W25 to L270 are non-LT domain. The LT domain stretch occupies residues G271–D494. Residue E317 is part of the active site. A disordered region spans residues Q464–D494. Residues P474–D494 show a composition bias toward pro residues.

It in the N-terminal section; belongs to the bacterial solute-binding protein 3 family. This sequence in the C-terminal section; belongs to the transglycosylase Slt family.

The protein localises to the cell outer membrane. The enzyme catalyses Exolytic cleavage of the (1-&gt;4)-beta-glycosidic linkage between N-acetylmuramic acid (MurNAc) and N-acetylglucosamine (GlcNAc) residues in peptidoglycan, from either the reducing or the non-reducing ends of the peptidoglycan chains, with concomitant formation of a 1,6-anhydrobond in the MurNAc residue.. Functionally, murein-degrading enzyme that degrades murein glycan strands and insoluble, high-molecular weight murein sacculi, with the concomitant formation of a 1,6-anhydromuramoyl product. Lytic transglycosylases (LTs) play an integral role in the metabolism of the peptidoglycan (PG) sacculus. Their lytic action creates space within the PG sacculus to allow for its expansion as well as for the insertion of various structures such as secretion systems and flagella. The sequence is that of Membrane-bound lytic murein transglycosylase F 1 from Alkalilimnicola ehrlichii (strain ATCC BAA-1101 / DSM 17681 / MLHE-1).